A 254-amino-acid chain; its full sequence is MANLGYWLLALFVATWTDVGLCKKRPKPGGWNTGGSRYPGQGNPGGNRYPPQGGGTWGQPHGGGWGQPHGGGWGQPHGGGWGQPHGGGWGQGGGTHSQWNKPSKPKTNMKHVAGAAAAGAVVGGLGGYMLGSAMSRPMIHFGNDWEDRYYRENMYRYPNQVYYRPVDQYNNQNNFVHDCVNITIKQHTVTTTTKGENFTETDVKMMERVVEQMCVTQYQKESQAYYDGRRSSAVLFSSPPMILLISFLIFLIVG.

A signal peptide spans 1–22 (MANLGYWLLALFVATWTDVGLC). Positions 23-231 (KKRPKPGGWN…SQAYYDGRRS (209 aa)) are interaction with GRB2, ERI3 and SYN1. The interval 25–107 (RPKPGGWNTG…QWNKPSKPKT (83 aa)) is disordered. 5 repeat units span residues 51-59 (PQGGGTWGQ), 60-67 (PHGGGWGQ), 68-75 (PHGGGWGQ), 76-83 (PHGGGWGQ), and 84-91 (PHGGGWGQ). Residues 51–91 (PQGGGTWGQPHGGGWGQPHGGGWGQPHGGGWGQPHGGGWGQ) are 5 X 8 AA tandem repeats of P-H-G-G-G-W-G-Q. Gly residues predominate over residues 52–95 (QGGGTWGQPHGGGWGQPHGGGWGQPHGGGWGQPHGGGWGQGGGT). H61, G62, G63, H69, G70, G71, H77, G78, G79, H85, G86, and G87 together coordinate Cu(2+). C179 and C214 are joined by a disulfide. N-linked (GlcNAc...) asparagine glycans are attached at residues N181 and N197. S231 is lipidated: GPI-anchor amidated serine. Residues 232–254 (SAVLFSSPPMILLISFLIFLIVG) constitute a propeptide, removed in mature form.

The protein belongs to the prion family. In terms of assembly, monomer and homodimer. Has a tendency to aggregate into amyloid fibrils containing a cross-beta spine, formed by a steric zipper of superposed beta-strands. Soluble oligomers may represent an intermediate stage on the path to fibril formation. Copper binding may promote oligomerization. Interacts with GRB2, APP, ERI3/PRNPIP and SYN1. Mislocalized cytosolically exposed PrP interacts with MGRN1; this interaction alters MGRN1 subcellular location and causes lysosomal enlargement. Interacts with KIAA1191.

It localises to the cell membrane. The protein localises to the golgi apparatus. Functionally, its primary physiological function is unclear. Has cytoprotective activity against internal or environmental stresses. May play a role in neuronal development and synaptic plasticity. May be required for neuronal myelin sheath maintenance. May play a role in iron uptake and iron homeostasis. Soluble oligomers are toxic to cultured neuroblastoma cells and induce apoptosis (in vitro). Association with GPC1 (via its heparan sulfate chains) targets PRNP to lipid rafts. Also provides Cu(2+) or Zn(2+) for the ascorbate-mediated GPC1 deaminase degradation of its heparan sulfate side chains. This is Major prion protein (PRNP) from Sigmodon hispidus (Hispid cotton rat).